Consider the following 138-residue polypeptide: Phosphoribosyl-AMP cyclohydrolase (138 aa).

A Mg(2+)-binding site is contributed by D86. C87 contacts Zn(2+). Residues D88 and D90 each contribute to the Mg(2+) site. Residues C104 and C111 each contribute to the Zn(2+) site.

It belongs to the PRA-CH family. Homodimer. Requires Mg(2+) as cofactor. Zn(2+) is required as a cofactor.

It localises to the cytoplasm. It carries out the reaction 1-(5-phospho-beta-D-ribosyl)-5'-AMP + H2O = 1-(5-phospho-beta-D-ribosyl)-5-[(5-phospho-beta-D-ribosylamino)methylideneamino]imidazole-4-carboxamide. It functions in the pathway amino-acid biosynthesis; L-histidine biosynthesis; L-histidine from 5-phospho-alpha-D-ribose 1-diphosphate: step 3/9. Catalyzes the hydrolysis of the adenine ring of phosphoribosyl-AMP. In Marinobacter nauticus (strain ATCC 700491 / DSM 11845 / VT8) (Marinobacter aquaeolei), this protein is Phosphoribosyl-AMP cyclohydrolase.